We begin with the raw amino-acid sequence, 380 residues long: Acetylornithine deacetylase (380 aa).

H79 contributes to the Zn(2+) binding site. D81 is a catalytic residue. Position 109 (D109) interacts with Zn(2+). E139 is a catalytic residue. Residues E140, E164, and H351 each coordinate Zn(2+).

Belongs to the peptidase M20A family. ArgE subfamily. In terms of assembly, homodimer. The cofactor is Zn(2+). Requires Co(2+) as cofactor. It depends on glutathione as a cofactor.

It is found in the cytoplasm. It catalyses the reaction N(2)-acetyl-L-ornithine + H2O = L-ornithine + acetate. It participates in amino-acid biosynthesis; L-arginine biosynthesis; L-ornithine from N(2)-acetyl-L-ornithine (linear): step 1/1. Catalyzes the hydrolysis of the amide bond of N(2)-acetylated L-amino acids. Cleaves the acetyl group from N-acetyl-L-ornithine to form L-ornithine, an intermediate in L-arginine biosynthesis pathway, and a branchpoint in the synthesis of polyamines. The polypeptide is Acetylornithine deacetylase (Myxococcus xanthus).